Reading from the N-terminus, the 453-residue chain is Bifunctional protein GlmU (453 aa).

The interval 1-225 (MNIVILAAGT…EWETLGVNSK (225 aa)) is pyrophosphorylase. Residues 6-9 (LAAG), Lys20, Gln71, 76-77 (GT), 98-100 (YGD), Gly135, Glu150, Asn165, and Asn223 contribute to the UDP-N-acetyl-alpha-D-glucosamine site. Asp100 is a binding site for Mg(2+). Mg(2+) is bound at residue Asn223. The segment at 226–246 (QQLAELERIHQHNVADALLVA) is linker. Positions 247-453 (GVTLADPARL…GYVRPTKKKS (207 aa)) are N-acetyltransferase. UDP-N-acetyl-alpha-D-glucosamine-binding residues include Arg329 and Lys347. The Proton acceptor role is filled by His359. Residues Tyr362 and Asn373 each contribute to the UDP-N-acetyl-alpha-D-glucosamine site. Acetyl-CoA contacts are provided by residues Ala376, 382 to 383 (NY), Ser401, and Ala419.

The protein in the N-terminal section; belongs to the N-acetylglucosamine-1-phosphate uridyltransferase family. It in the C-terminal section; belongs to the transferase hexapeptide repeat family. In terms of assembly, homotrimer. Requires Mg(2+) as cofactor.

The protein resides in the cytoplasm. It catalyses the reaction alpha-D-glucosamine 1-phosphate + acetyl-CoA = N-acetyl-alpha-D-glucosamine 1-phosphate + CoA + H(+). The catalysed reaction is N-acetyl-alpha-D-glucosamine 1-phosphate + UTP + H(+) = UDP-N-acetyl-alpha-D-glucosamine + diphosphate. It participates in nucleotide-sugar biosynthesis; UDP-N-acetyl-alpha-D-glucosamine biosynthesis; N-acetyl-alpha-D-glucosamine 1-phosphate from alpha-D-glucosamine 6-phosphate (route II): step 2/2. It functions in the pathway nucleotide-sugar biosynthesis; UDP-N-acetyl-alpha-D-glucosamine biosynthesis; UDP-N-acetyl-alpha-D-glucosamine from N-acetyl-alpha-D-glucosamine 1-phosphate: step 1/1. Its pathway is bacterial outer membrane biogenesis; LPS lipid A biosynthesis. Functionally, catalyzes the last two sequential reactions in the de novo biosynthetic pathway for UDP-N-acetylglucosamine (UDP-GlcNAc). The C-terminal domain catalyzes the transfer of acetyl group from acetyl coenzyme A to glucosamine-1-phosphate (GlcN-1-P) to produce N-acetylglucosamine-1-phosphate (GlcNAc-1-P), which is converted into UDP-GlcNAc by the transfer of uridine 5-monophosphate (from uridine 5-triphosphate), a reaction catalyzed by the N-terminal domain. This Paraburkholderia phytofirmans (strain DSM 17436 / LMG 22146 / PsJN) (Burkholderia phytofirmans) protein is Bifunctional protein GlmU.